A 457-amino-acid chain; its full sequence is Cystathionine beta-lyase (457 aa).

The disordered stretch occupies residues 1–41; that stretch reads MSTPNSDSPAAQAAKKVFSRLDLDGHNLPPSPAPSSPHNGR.

It belongs to the trans-sulfuration enzymes family. Requires pyridoxal 5'-phosphate as cofactor.

It is found in the cytoplasm. Its subcellular location is the nucleus. It catalyses the reaction L,L-cystathionine + H2O = L-homocysteine + pyruvate + NH4(+). The catalysed reaction is an S-substituted L-cysteine + H2O = a thiol + pyruvate + NH4(+). It functions in the pathway amino-acid biosynthesis; L-methionine biosynthesis via de novo pathway; L-homocysteine from L-cystathionine: step 1/1. Functionally, involved in de novo synthesis of methionine. This Neurospora crassa (strain ATCC 24698 / 74-OR23-1A / CBS 708.71 / DSM 1257 / FGSC 987) protein is Cystathionine beta-lyase (met-2).